A 140-amino-acid polypeptide reads, in one-letter code: Transcription antitermination protein NusB (140 aa).

This sequence belongs to the NusB family.

In terms of biological role, involved in transcription antitermination. Required for transcription of ribosomal RNA (rRNA) genes. Binds specifically to the boxA antiterminator sequence of the ribosomal RNA (rrn) operons. The protein is Transcription antitermination protein NusB of Thermoanaerobacter pseudethanolicus (strain ATCC 33223 / 39E) (Clostridium thermohydrosulfuricum).